We begin with the raw amino-acid sequence, 318 residues long: UDP-3-O-acylglucosamine N-acyltransferase (318 aa).

The Proton acceptor role is filled by His-230.

This sequence belongs to the transferase hexapeptide repeat family. LpxD subfamily. Homotrimer.

The catalysed reaction is a UDP-3-O-[(3R)-3-hydroxyacyl]-alpha-D-glucosamine + a (3R)-hydroxyacyl-[ACP] = a UDP-2-N,3-O-bis[(3R)-3-hydroxyacyl]-alpha-D-glucosamine + holo-[ACP] + H(+). The protein operates within bacterial outer membrane biogenesis; LPS lipid A biosynthesis. In terms of biological role, catalyzes the N-acylation of UDP-3-O-acylglucosamine using 3-hydroxyacyl-ACP as the acyl donor. Is involved in the biosynthesis of lipid A, a phosphorylated glycolipid that anchors the lipopolysaccharide to the outer membrane of the cell. In Wolinella succinogenes (strain ATCC 29543 / DSM 1740 / CCUG 13145 / JCM 31913 / LMG 7466 / NCTC 11488 / FDC 602W) (Vibrio succinogenes), this protein is UDP-3-O-acylglucosamine N-acyltransferase.